We begin with the raw amino-acid sequence, 245 residues long: Exosome complex component RRP41 (245 aa).

Alanine 2 is subject to N-acetylalanine.

The protein belongs to the RNase PH family. As to quaternary structure, component of the RNA exosome core complex (Exo-9), composed of EXOSC1, EXOSC2, EXOSC3, EXOSC4, EXOSC5, EXOSC6, EXOSC7, EXOSC8 and EXOSC9; within the complex interacts with EXOSC2, EXOSC7 and EXOSC9. The catalytically inactive RNA exosome core complex (Exo-9) associates with the catalytic subunit EXOSC10/RRP6. Exo-9 may associate with DIS3 to form the nucleolar exosome complex, or DIS3L to form the cytoplasmic exosome complex. Exo-9 is formed by a hexameric base ring consisting of the heterodimers EXOSC4-EXOSC9, EXOSC5-EXOSC8 and EXOSC6-EXOSC7, and a cap ring consisting of EXOSC1, EXOSC2 and EXOSC3. The RNA exosome complex associates with cofactors C1D/RRP47, MPHOSPH6/MPP6 and MTREX/MTR4. Interacts with DDX60. Interacts with DIS3; the interaction is direct.

It localises to the cytoplasm. It is found in the nucleus. The protein localises to the nucleolus. Its subcellular location is the nucleoplasm. In terms of biological role, non-catalytic component of the RNA exosome complex which has 3'-&gt;5' exoribonuclease activity and participates in a multitude of cellular RNA processing and degradation events. In the nucleus, the RNA exosome complex is involved in proper maturation of stable RNA species such as rRNA, snRNA and snoRNA, in the elimination of RNA processing by-products and non-coding 'pervasive' transcripts, such as antisense RNA species and promoter-upstream transcripts (PROMPTs), and of mRNAs with processing defects, thereby limiting or excluding their export to the cytoplasm. The RNA exosome may be involved in Ig class switch recombination (CSR) and/or Ig variable region somatic hypermutation (SHM) by targeting AICDA deamination activity to transcribed dsDNA substrates. In the cytoplasm, the RNA exosome complex is involved in general mRNA turnover and specifically degrades inherently unstable mRNAs containing AU-rich elements (AREs) within their 3' untranslated regions, and in RNA surveillance pathways, preventing translation of aberrant mRNAs. It seems to be involved in degradation of histone mRNA. The catalytic inactive RNA exosome core complex of 9 subunits (Exo-9) is proposed to play a pivotal role in the binding and presentation of RNA for ribonucleolysis, and to serve as a scaffold for the association with catalytic subunits and accessory proteins or complexes. EXOSC4 binds to ARE-containing RNAs. The chain is Exosome complex component RRP41 (EXOSC4) from Bos taurus (Bovine).